The primary structure comprises 651 residues: Probable potassium transport system protein Kup (651 aa).

Helical transmembrane passes span 41 to 61 (LVLGALGVVYGDIGTSPIYAF), 82 to 102 (VVSLIFWALTLVVTVKYVLFV), 130 to 150 (LILGVGICGAALFFGDAVITP), 163 to 183 (IVAPNLTPFVVPATVVILVTL), 194 to 214 (VAIVFGPIMALWFVALGASGL), 235 to 255 (FLTVSPAVAFVTVGAVFLAMT), 276 to 296 (WLWIVFPCLLLNYFGQAAFIL), 309 to 329 (MIPSFALWPMVLLATAATVIA), 366 to 386 (IYIPRVNLLLGLAVVILVLGF), 395 to 415 (AYGIAVTGNMLVTTVLLYIVM), 426 to 446 (ALPIILGFLVIDMLFFSANII), and 450 to 470 (EGGWASIGIATVLVLIMWTWV).

It belongs to the HAK/KUP transporter (TC 2.A.72) family.

The protein localises to the cell inner membrane. The catalysed reaction is K(+)(in) + H(+)(in) = K(+)(out) + H(+)(out). In terms of biological role, transport of potassium into the cell. Likely operates as a K(+):H(+) symporter. The chain is Probable potassium transport system protein Kup from Brucella suis (strain ATCC 23445 / NCTC 10510).